The primary structure comprises 247 residues: Protein-L-isoaspartate O-methyltransferase 2 (247 aa).

The active site involves Ser97.

Belongs to the methyltransferase superfamily. L-isoaspartyl/D-aspartyl protein methyltransferase family.

Its subcellular location is the cytoplasm. It carries out the reaction [protein]-L-isoaspartate + S-adenosyl-L-methionine = [protein]-L-isoaspartate alpha-methyl ester + S-adenosyl-L-homocysteine. Catalyzes the methyl esterification of L-isoaspartyl residues in peptides and proteins that result from spontaneous decomposition of normal L-aspartyl and L-asparaginyl residues. It plays a role in the repair and/or degradation of damaged proteins. This chain is Protein-L-isoaspartate O-methyltransferase 2, found in Syntrophobacter fumaroxidans (strain DSM 10017 / MPOB).